We begin with the raw amino-acid sequence, 1146 residues long: Reverse gyrase 1 (1146 aa).

An RG N-terminal-type zinc finger spans residues 1 to 38; sequence MIKAIFDTLCPNCGGEISAERLLKGLPCEKCLPEEVNR. The Zn(2+) site is built by cysteine 10, cysteine 13, cysteine 28, and cysteine 31. ATP contacts are provided by residues glutamine 79 and 96-103; that span reads APTGVGKT. In terms of domain architecture, Helicase ATP-binding spans 83 to 240; sequence ARKVFLGRSF…RLKEKPNKSE (158 aa). Positions 197–200 match the DEAD box motif; that stretch reads DDVD. The region spanning 412–565 is the Helicase C-terminal domain; the sequence is HLLWALLSLR…FKKIEEVDLK (154 aa). Residues 592–1146 are topoisomerase I; sequence EHVKPVLVVV…KVNEFEKANV (555 aa). One can recognise a Toprim domain in the interval 596-728; it reads PVLVVVESPN…NVERIEFHEV (133 aa). Mg(2+) is bound by residues glutamate 602 and aspartate 697. A Topo IA-type catalytic domain is found at 744-1142; that stretch reads NENLVKAQLV…ELYKKVNEFE (399 aa). Catalysis depends on tyrosine 891, which acts as the O-(5'-phospho-DNA)-tyrosine intermediate.

In the N-terminal section; belongs to the DEAD box helicase family. DDVD subfamily. It in the C-terminal section; belongs to the type IA topoisomerase family. Monomer. It depends on Zn(2+) as a cofactor. Mg(2+) is required as a cofactor.

It localises to the cytoplasm. It catalyses the reaction ATP + H2O = ADP + phosphate + H(+). Its function is as follows. Modifies the topological state of DNA by introducing positive supercoils in an ATP-dependent process, increasing the linking number in steps of +1. Binds to single-stranded DNA, transiently cleaves and then rejoins the ends, introducing a positive supercoil in the process. The scissile phosphodiester is attacked by the catalytic tyrosine of the enzyme, resulting in the formation of a DNA-(5'-phosphotyrosyl)-enzyme intermediate. Probably involved in rewinding DNA strands in regions of the chromosome that have opened up to allow replication, transcription, DNA repair and/or for DNA protection. The protein is Reverse gyrase 1 of Aquifex aeolicus (strain VF5).